A 162-amino-acid polypeptide reads, in one-letter code: 6,7-dimethyl-8-ribityllumazine synthase (162 aa).

Residues Tyr-27, 58–60, and 87–89 contribute to the 5-amino-6-(D-ribitylamino)uracil site; these read ALE and CVI. 92 to 93 contacts (2S)-2-hydroxy-3-oxobutyl phosphate; sequence ET. Catalysis depends on His-95, which acts as the Proton donor. Asn-120 lines the 5-amino-6-(D-ribitylamino)uracil pocket. Arg-134 contributes to the (2S)-2-hydroxy-3-oxobutyl phosphate binding site.

It belongs to the DMRL synthase family.

It carries out the reaction (2S)-2-hydroxy-3-oxobutyl phosphate + 5-amino-6-(D-ribitylamino)uracil = 6,7-dimethyl-8-(1-D-ribityl)lumazine + phosphate + 2 H2O + H(+). It functions in the pathway cofactor biosynthesis; riboflavin biosynthesis; riboflavin from 2-hydroxy-3-oxobutyl phosphate and 5-amino-6-(D-ribitylamino)uracil: step 1/2. Catalyzes the formation of 6,7-dimethyl-8-ribityllumazine by condensation of 5-amino-6-(D-ribitylamino)uracil with 3,4-dihydroxy-2-butanone 4-phosphate. This is the penultimate step in the biosynthesis of riboflavin. In Azorhizobium caulinodans (strain ATCC 43989 / DSM 5975 / JCM 20966 / LMG 6465 / NBRC 14845 / NCIMB 13405 / ORS 571), this protein is 6,7-dimethyl-8-ribityllumazine synthase.